Here is a 118-residue protein sequence, read N- to C-terminus: Ribonuclease P protein component (118 aa).

It belongs to the RnpA family. Consists of a catalytic RNA component (M1 or rnpB) and a protein subunit.

It catalyses the reaction Endonucleolytic cleavage of RNA, removing 5'-extranucleotides from tRNA precursor.. Its function is as follows. RNaseP catalyzes the removal of the 5'-leader sequence from pre-tRNA to produce the mature 5'-terminus. It can also cleave other RNA substrates such as 4.5S RNA. The protein component plays an auxiliary but essential role in vivo by binding to the 5'-leader sequence and broadening the substrate specificity of the ribozyme. This Rickettsia conorii (strain ATCC VR-613 / Malish 7) protein is Ribonuclease P protein component.